Here is a 486-residue protein sequence, read N- to C-terminus: MTTVYTLVSWLAILGYWLLIAGVTLRILMKRRAVPSAMAWLLIIYILPLVGIIAYLAVGELHLGKRRAERARAMWPSTAKWLNDLKACKHIFAEENSSVAAPLFKLCERRQGIAGVKGNQLQLMTESDDVMQALIRDIQLARHNIEMVFYIWQPGGMADQVAESLMAAARRGIHCRLMLDSAGSVAFFRSPWPELMRNAGIEVVEALKVNLMRVFLRRMDLRQHRKMIMIDNYIAYTGSMNMVDPRYFKQDAGVGQWIDLMARMEGPIATAMGIIYSCDWEIETGKRILPPPPDVNIMPFEQASGHTIHTIASGPGFPEDLIHQALLTAAYSAREYLIMTTPYFVPSDDLLHAICTAAQRGVDVSIILPRKNDSMLVGWASRAFFTELLAAGVKIYQFEGGLLHTKSVLVDGELSLVGTVNLDMRSLWLNFEITLAIDDKGFGADLAAVQDDYISRSRLLDARLWLKRPLWQRVAERLFYFFSPLL.

Helical transmembrane passes span Thr-3–Val-23 and Met-38–Val-58. 2 PLD phosphodiesterase domains span residues Met-219–Arg-246 and Glu-399–Ser-426. Residues His-224, Lys-226, Asp-231, His-404, Lys-406, and Asp-411 contribute to the active site.

This sequence belongs to the phospholipase D family. Cardiolipin synthase subfamily. ClsA sub-subfamily.

It is found in the cell inner membrane. The catalysed reaction is 2 a 1,2-diacyl-sn-glycero-3-phospho-(1'-sn-glycerol) = a cardiolipin + glycerol. Catalyzes the reversible phosphatidyl group transfer from one phosphatidylglycerol molecule to another to form cardiolipin (CL) (diphosphatidylglycerol) and glycerol. This Escherichia coli O7:K1 (strain IAI39 / ExPEC) protein is Cardiolipin synthase A.